Consider the following 563-residue polypeptide: Arginine--tRNA ligase (563 aa).

The 'HIGH' region signature appears at 134 to 144; that stretch reads ANPTGLLHMGN.

It belongs to the class-I aminoacyl-tRNA synthetase family. In terms of assembly, monomer.

The protein localises to the cytoplasm. It catalyses the reaction tRNA(Arg) + L-arginine + ATP = L-arginyl-tRNA(Arg) + AMP + diphosphate. The polypeptide is Arginine--tRNA ligase (Heliobacterium modesticaldum (strain ATCC 51547 / Ice1)).